Here is a 379-residue protein sequence, read N- to C-terminus: Pectin lyase B (379 aa).

The first 19 residues, 1–19, serve as a signal peptide directing secretion; the sequence is MRLHAPILSLLAAAASTSA. 2 cysteine pairs are disulfide-bonded: Cys82/Cys101 and Cys91/Cys225. N-linked (GlcNAc...) asparagine glycosylation is present at Asn128. Arg255 is a catalytic residue. A disulfide bridge connects residues Cys322 and Cys330.

The protein belongs to the polysaccharide lyase 1 family.

The protein localises to the secreted. The enzyme catalyses Eliminative cleavage of (1-&gt;4)-alpha-D-galacturonan methyl ester to give oligosaccharides with 4-deoxy-6-O-methyl-alpha-D-galact-4-enuronosyl groups at their non-reducing ends.. In terms of biological role, pectinolytic enzymes consist of four classes of enzymes: pectin lyase, polygalacturonase, pectin methylesterase and rhamnogalacturonase. Among pectinolytic enzymes, pectin lyase is the most important in depolymerization of pectin, since it cleaves internal glycosidic bonds of highly methylated pectins. The protein is Pectin lyase B (pelB) of Emericella nidulans (strain FGSC A4 / ATCC 38163 / CBS 112.46 / NRRL 194 / M139) (Aspergillus nidulans).